A 505-amino-acid polypeptide reads, in one-letter code: Putative diacyglycerol O-acyltransferase MT0919 (505 aa).

The active-site Proton acceptor is the His-167.

It belongs to the long-chain O-acyltransferase family.

It carries out the reaction an acyl-CoA + a 1,2-diacyl-sn-glycerol = a triacyl-sn-glycerol + CoA. Its pathway is glycerolipid metabolism; triacylglycerol biosynthesis. This chain is Putative diacyglycerol O-acyltransferase MT0919, found in Mycobacterium tuberculosis (strain CDC 1551 / Oshkosh).